Consider the following 424-residue polypeptide: 3-ketoacyl-CoA thiolase, peroxisomal (424 aa).

A peroxisome-targeting transit peptide spans 1–26 (MQRLQVVLGHLRGPADSGWMPQAAPC). A PTS2-type peroxisomal targeting signal region spans residues 1–26 (MQRLQVVLGHLRGPADSGWMPQAAPC). Thr59 and Thr60 each carry phosphothreonine. The Acyl-thioester intermediate role is filled by Cys123. Catalysis depends on proton acceptor residues His377 and Cys408.

The protein belongs to the thiolase-like superfamily. Thiolase family. As to quaternary structure, homodimer. Interacts (via PTS2-type peroxisomal targeting signal region) with PEX7; leading to its translocation into peroxisomes.

It localises to the peroxisome. It carries out the reaction an acyl-CoA + acetyl-CoA = a 3-oxoacyl-CoA + CoA. It catalyses the reaction 2 acetyl-CoA = acetoacetyl-CoA + CoA. The catalysed reaction is tetradecanoyl-CoA + acetyl-CoA = 3-oxohexadecanoyl-CoA + CoA. The enzyme catalyses hexanoyl-CoA + acetyl-CoA = 3-oxooctanoyl-CoA + CoA. It carries out the reaction 3-oxohexadecanedioyl-CoA + CoA = tetradecanedioyl-CoA + acetyl-CoA. It catalyses the reaction 3-oxo-(6Z,9Z,12Z,15Z,18Z,21Z)-tetracosahexaenoyl-CoA + CoA = (4Z,7Z,10Z,13Z,16Z,19Z)-docosahexaenoyl-CoA + acetyl-CoA. The protein operates within lipid metabolism; peroxisomal fatty acid beta-oxidation. Functionally, responsible for the thiolytic cleavage of straight chain 3-keto fatty acyl-CoAs (3-oxoacyl-CoAs). Plays an important role in fatty acid peroxisomal beta-oxidation. Catalyzes the cleavage of short, medium, long, and very long straight chain 3-oxoacyl-CoAs. The sequence is that of 3-ketoacyl-CoA thiolase, peroxisomal from Homo sapiens (Human).